The following is a 370-amino-acid chain: Peptidyl-prolyl cis-trans isomerase D (370 aa).

The residue at position 5 (Ser5) is a Phosphoserine. The 165-residue stretch at 19-183 (FFDVDIGGER…KLCVIAECGE (165 aa)) folds into the PPIase cyclophilin-type domain. Lys171 carries the N6-acetyllysine modification. Positions 185-215 (KEGDEWGIFPKDGSGDSHPDFPEDADIDLKD) are chaperone activity. Ser198 is modified (phosphoserine). The interaction with HSP90AB1 stretch occupies residues 214–370 (KDVDKILLIS…EKAVYAKMFA (157 aa)). 3 TPR repeats span residues 223–256 (SEDL…LDSS), 273–306 (LSCV…DPSN), and 308–340 (KALY…APGD).

Belongs to the cyclophilin-type PPIase family. PPIase D subfamily. In terms of assembly, identified in ESR1 or NR3C1/GCR steroid receptor-chaperone complexes. Found in HSP90 chaperone complexes with kinase clients LCK or EIF2AK1. Two monomers associate with one HSP90 homodimer. Interacts with HSP90AA1. Interacts with HSP90AB1; PPID and FKBP4 compete for binding to HSP90AB1 and the interaction is mutually exclusive with the PPID:HSPA8 interaction. Interacts with HSPA8; PPID and STIP1 but not FKBP4 compete for binding to HSPA8 and the interaction is mutually exclusive with the PPID:HSP90AB1 interaction. Interacts with S100A1 and S100A2; the interactions dissociate the PPID:HSP90AA1 interaction. Interacts with S100A6. Interacts with MYB, ILF2, XRCC6, RACK1 and RPS3. Interacts with cytoplasmic dynein 1 intermediate chain (DYNC1I1 or DYNC1I2).

It localises to the cytoplasm. Its subcellular location is the nucleus. The protein resides in the nucleolus. It is found in the nucleoplasm. The catalysed reaction is [protein]-peptidylproline (omega=180) = [protein]-peptidylproline (omega=0). Less sensitive to inhibition by cyclosporin A than is CYP-18. PPIase that catalyzes the cis-trans isomerization of proline imidic peptide bonds in oligopeptides and may therefore assist protein folding. Proposed to act as a co-chaperone in HSP90 complexes such as in unligated steroid receptors heterocomplexes. Different co-chaperones seem to compete for association with HSP90 thus establishing distinct HSP90-co-chaperone-receptor complexes with the potential to exert tissue-specific receptor activity control. May have a preference for estrogen receptor complexes and is not found in glucocorticoid receptor complexes. May be involved in cytoplasmic dynein-dependent movement of the receptor from the cytoplasm to the nucleus. May regulate MYB by inhibiting its DNA-binding activity. Involved in regulation of AHR signaling by promoting the formation of the AHR:ARNT dimer; the function is independent of HSP90 but requires the chaperone activity region. Involved in regulation of UV radiation-induced apoptosis. This is Peptidyl-prolyl cis-trans isomerase D from Rattus norvegicus (Rat).